The sequence spans 245 residues: Biosynthetic peptidoglycan transglycosylase (245 aa).

A helical transmembrane segment spans residues 19-39; the sequence is IVYAGAVFAAAWLATQLFYFV.

This sequence belongs to the glycosyltransferase 51 family.

It is found in the cell inner membrane. The catalysed reaction is [GlcNAc-(1-&gt;4)-Mur2Ac(oyl-L-Ala-gamma-D-Glu-L-Lys-D-Ala-D-Ala)](n)-di-trans,octa-cis-undecaprenyl diphosphate + beta-D-GlcNAc-(1-&gt;4)-Mur2Ac(oyl-L-Ala-gamma-D-Glu-L-Lys-D-Ala-D-Ala)-di-trans,octa-cis-undecaprenyl diphosphate = [GlcNAc-(1-&gt;4)-Mur2Ac(oyl-L-Ala-gamma-D-Glu-L-Lys-D-Ala-D-Ala)](n+1)-di-trans,octa-cis-undecaprenyl diphosphate + di-trans,octa-cis-undecaprenyl diphosphate + H(+). The protein operates within cell wall biogenesis; peptidoglycan biosynthesis. Its function is as follows. Peptidoglycan polymerase that catalyzes glycan chain elongation from lipid-linked precursors. The sequence is that of Biosynthetic peptidoglycan transglycosylase from Burkholderia multivorans (strain ATCC 17616 / 249).